We begin with the raw amino-acid sequence, 126 residues long: Large ribosomal subunit protein bL17c (126 aa).

The N-terminal 10 residues, 1-10 (MIDNGGRFFA), are a transit peptide targeting the chloroplast.

In terms of assembly, component of the chloroplast large ribosomal subunit (LSU). Mature 70S chloroplast ribosomes of higher plants consist of a small (30S) and a large (50S) subunit. The 30S small subunit contains 1 molecule of ribosomal RNA (16S rRNA) and 24 different proteins. The 50S large subunit contains 3 rRNA molecules (23S, 5S and 4.5S rRNA) and 33 different proteins.

The protein localises to the plastid. It is found in the chloroplast. Component of the chloroplast ribosome (chloro-ribosome), a dedicated translation machinery responsible for the synthesis of chloroplast genome-encoded proteins, including proteins of the transcription and translation machinery and components of the photosynthetic apparatus. The sequence is that of Large ribosomal subunit protein bL17c (RPL17) from Spinacia oleracea (Spinach).